The sequence spans 422 residues: CRISPR-associated endodeoxyribonuclease Cas12f1 (422 aa).

Positions 1-126 (MIKVYRYEIV…PSYKRDIPLD (126 aa)) are recognition domain (REC). The interval 127 to 211 (LIKENISVNR…YLNISYDFEP (85 aa)) is wedge domain (WED). The tract at residues 212–220 (QTRVLDLNK) is linker. The tract at residues 221 to 370 (IMGIDLGVAV…IKIDPQYTSQ (150 aa)) is ruvC-I. Active-site residues include Asp225 and Glu324. The target nucleic acid-binding (TNB) stretch occupies residues 371–399 (RCSECGNIDSGNRIGQAIFKCRACGYEAN). Zn(2+)-binding residues include Cys372, Cys375, Cys391, and Cys394. The segment at 400-420 (ADYNAARNIAIPNIDKIIAES) is ruvC-II. Asp401 is a catalytic residue.

Belongs to the CRISPR-associated endonuclease Cas12f family. An asymmetric homodimer. Guide RNA is probably required for dimerization. Mg(2+) is required as a cofactor. Requires Zn(2+) as cofactor.

Its function is as follows. CRISPR (clustered regularly interspaced short palindromic repeat), is an adaptive immune system that provides protection against mobile genetic elements (viruses, transposable elements and conjugative plasmids). CRISPR clusters contain sequences complementary to antecedent mobile elements and target invading nucleic acids. CRISPR clusters are transcribed and processed into CRISPR RNA (crRNA), which requires a trans-encoded small RNA (tracrRNA), but not this protein. Recognizes a short motif in the CRISPR repeat sequences (the 5' PAM or protospacer adjacent motif, YTT in this organism) to help distinguish self versus nonself, as targets within the CRISPR locus do not have PAMs. Has dsDNA endonuclease activity upon expression in E.coli of this protein, a mini CRISPR array and the probable tracrRNA. Plasmid cleavage is centered around positions 19-24 base pairs 3' of PAM. The mini system protects E.coli against transformation by foreign plasmids. In Sulfoacidibacillus thermotolerans (Acidibacillus sulfuroxidans), this protein is CRISPR-associated endodeoxyribonuclease Cas12f1.